The chain runs to 618 residues: Dihydroxy-acid dehydratase (618 aa).

Asp81 contributes to the Mg(2+) binding site. [2Fe-2S] cluster is bound at residue Cys122. Positions 123 and 124 each coordinate Mg(2+). N6-carboxylysine is present on Lys124. Cys199 contributes to the [2Fe-2S] cluster binding site. Glu495 is a Mg(2+) binding site. Ser521 serves as the catalytic Proton acceptor.

It belongs to the IlvD/Edd family. As to quaternary structure, homodimer. Requires [2Fe-2S] cluster as cofactor. Mg(2+) serves as cofactor.

It catalyses the reaction (2R)-2,3-dihydroxy-3-methylbutanoate = 3-methyl-2-oxobutanoate + H2O. It carries out the reaction (2R,3R)-2,3-dihydroxy-3-methylpentanoate = (S)-3-methyl-2-oxopentanoate + H2O. Its pathway is amino-acid biosynthesis; L-isoleucine biosynthesis; L-isoleucine from 2-oxobutanoate: step 3/4. The protein operates within amino-acid biosynthesis; L-valine biosynthesis; L-valine from pyruvate: step 3/4. Functions in the biosynthesis of branched-chain amino acids. Catalyzes the dehydration of (2R,3R)-2,3-dihydroxy-3-methylpentanoate (2,3-dihydroxy-3-methylvalerate) into 2-oxo-3-methylpentanoate (2-oxo-3-methylvalerate) and of (2R)-2,3-dihydroxy-3-methylbutanoate (2,3-dihydroxyisovalerate) into 2-oxo-3-methylbutanoate (2-oxoisovalerate), the penultimate precursor to L-isoleucine and L-valine, respectively. The chain is Dihydroxy-acid dehydratase from Blochmanniella floridana.